The following is a 236-amino-acid chain: 2-C-methyl-D-erythritol 4-phosphate cytidylyltransferase (236 aa).

This sequence belongs to the IspD/TarI cytidylyltransferase family. IspD subfamily. In terms of assembly, homodimer.

The catalysed reaction is 2-C-methyl-D-erythritol 4-phosphate + CTP + H(+) = 4-CDP-2-C-methyl-D-erythritol + diphosphate. Its pathway is isoprenoid biosynthesis; isopentenyl diphosphate biosynthesis via DXP pathway; isopentenyl diphosphate from 1-deoxy-D-xylulose 5-phosphate: step 2/6. Its function is as follows. Catalyzes the formation of 4-diphosphocytidyl-2-C-methyl-D-erythritol from CTP and 2-C-methyl-D-erythritol 4-phosphate (MEP). The sequence is that of 2-C-methyl-D-erythritol 4-phosphate cytidylyltransferase from Salmonella agona (strain SL483).